The chain runs to 404 residues: Probable pectate lyase 18 (404 aa).

Residues 1-20 (MSTLFFTFSLLLLAPLLVIS) form the signal peptide. N37 carries an N-linked (GlcNAc...) asparagine glycan. A disulfide bridge links C159 with C178. An N-linked (GlcNAc...) asparagine glycan is attached at N191. Ca(2+) contacts are provided by D200, D202, D224, and D228. Residue R280 is part of the active site.

The protein belongs to the polysaccharide lyase 1 family. Requires Ca(2+) as cofactor. In terms of tissue distribution, predominantly found in the pistil where it is found in the outer five layers of the strands of transmitting tissue within the upper two-thirds of the style. Found at much lower levels in the anthers and vegetative organs.

Its subcellular location is the secreted. It catalyses the reaction Eliminative cleavage of (1-&gt;4)-alpha-D-galacturonan to give oligosaccharides with 4-deoxy-alpha-D-galact-4-enuronosyl groups at their non-reducing ends.. It functions in the pathway glycan metabolism; pectin degradation; 2-dehydro-3-deoxy-D-gluconate from pectin: step 2/5. In terms of biological role, may have a role in the development of the transmitting tissue of the style and/or in the events related to pollination such as some aspect in the facilitation of compatible pollen tube growth. The sequence is that of Probable pectate lyase 18 from Solanum lycopersicum (Tomato).